A 354-amino-acid polypeptide reads, in one-letter code: Glutamine synthetase (354 aa).

Residues 22–101 (FHAEYVWIDG…VLSETYNNDG (80 aa)) form the GS beta-grasp domain. Residues 108 to 354 (HRHHTAKVME…IIIETTILDK (247 aa)) enclose the GS catalytic domain.

It belongs to the glutamine synthetase family. Homooctamer.

The protein resides in the cytoplasm. The enzyme catalyses L-glutamate + NH4(+) + ATP = L-glutamine + ADP + phosphate + H(+). This is Glutamine synthetase (GLN1) from Amanita muscaria (Fly agaric).